The sequence spans 408 residues: Arginine biosynthesis bifunctional protein ArgJ (408 aa).

6 residues coordinate substrate: threonine 156, lysine 182, threonine 193, glutamate 279, asparagine 403, and serine 408. The Nucleophile role is filled by threonine 193.

The protein belongs to the ArgJ family. Heterotetramer of two alpha and two beta chains.

The protein localises to the cytoplasm. It carries out the reaction N(2)-acetyl-L-ornithine + L-glutamate = N-acetyl-L-glutamate + L-ornithine. The enzyme catalyses L-glutamate + acetyl-CoA = N-acetyl-L-glutamate + CoA + H(+). The protein operates within amino-acid biosynthesis; L-arginine biosynthesis; L-ornithine and N-acetyl-L-glutamate from L-glutamate and N(2)-acetyl-L-ornithine (cyclic): step 1/1. It functions in the pathway amino-acid biosynthesis; L-arginine biosynthesis; N(2)-acetyl-L-ornithine from L-glutamate: step 1/4. Catalyzes two activities which are involved in the cyclic version of arginine biosynthesis: the synthesis of N-acetylglutamate from glutamate and acetyl-CoA as the acetyl donor, and of ornithine by transacetylation between N(2)-acetylornithine and glutamate. In Dechloromonas aromatica (strain RCB), this protein is Arginine biosynthesis bifunctional protein ArgJ.